The chain runs to 943 residues: Protein translocase subunit SecA (943 aa).

Residues Q90, 108-112 (GEGKT), and D509 each bind ATP. A disordered region spans residues 537 to 556 (NEHKPPIPKQRSSKSKGGFS).

This sequence belongs to the SecA family. As to quaternary structure, monomer and homodimer. Part of the essential Sec protein translocation apparatus which comprises SecA, SecYEG and auxiliary proteins SecDF. Other proteins may also be involved.

The protein localises to the cell inner membrane. The protein resides in the cellular thylakoid membrane. Its subcellular location is the cytoplasm. The catalysed reaction is ATP + H2O + cellular proteinSide 1 = ADP + phosphate + cellular proteinSide 2.. Its function is as follows. Part of the Sec protein translocase complex. Interacts with the SecYEG preprotein conducting channel. Has a central role in coupling the hydrolysis of ATP to the transfer of proteins into and across the cell membrane, serving as an ATP-driven molecular motor driving the stepwise translocation of polypeptide chains across the membrane. Functionally, probably participates in protein translocation into and across both the cytoplasmic and thylakoid membranes in cyanobacterial cells. This chain is Protein translocase subunit SecA, found in Prochlorococcus marinus (strain MIT 9301).